The sequence spans 609 residues: Glutamine--fructose-6-phosphate aminotransferase [isomerizing] (609 aa).

The active-site Nucleophile; for GATase activity is C2. The region spanning C2–R218 is the Glutamine amidotransferase type-2 domain. 2 SIS domains span residues A286–A426 and L458–P599. K604 functions as the For Fru-6P isomerization activity in the catalytic mechanism.

As to quaternary structure, homodimer.

Its subcellular location is the cytoplasm. The enzyme catalyses D-fructose 6-phosphate + L-glutamine = D-glucosamine 6-phosphate + L-glutamate. Catalyzes the first step in hexosamine metabolism, converting fructose-6P into glucosamine-6P using glutamine as a nitrogen source. The polypeptide is Glutamine--fructose-6-phosphate aminotransferase [isomerizing] (Yersinia pestis).